The primary structure comprises 248 residues: 2,3-bisphosphoglycerate-dependent phosphoglycerate mutase (248 aa).

Substrate-binding positions include 8–15 (RHGESIWN), 21–22 (TG), Arg-60, 87–90 (EKHY), Lys-98, 114–115 (RR), and 183–184 (GN). His-9 acts as the Tele-phosphohistidine intermediate in catalysis. Glu-87 (proton donor/acceptor) is an active-site residue.

This sequence belongs to the phosphoglycerate mutase family. BPG-dependent PGAM subfamily.

The catalysed reaction is (2R)-2-phosphoglycerate = (2R)-3-phosphoglycerate. The protein operates within carbohydrate degradation; glycolysis; pyruvate from D-glyceraldehyde 3-phosphate: step 3/5. Catalyzes the interconversion of 2-phosphoglycerate and 3-phosphoglycerate. The polypeptide is 2,3-bisphosphoglycerate-dependent phosphoglycerate mutase (Parabacteroides distasonis (strain ATCC 8503 / DSM 20701 / CIP 104284 / JCM 5825 / NCTC 11152)).